The sequence spans 59 residues: UPF0434 protein PMI0721 (59 aa).

Belongs to the UPF0434 family.

In Proteus mirabilis (strain HI4320), this protein is UPF0434 protein PMI0721.